A 146-amino-acid chain; its full sequence is uncharacterized protein (146 aa).

The disordered stretch occupies residues 87–121; sequence SRSHHSTAKSAKSALSSDSGDGSDPDPEPETFPSA. The segment covering 94-106 has biased composition (low complexity); the sequence is AKSAKSALSSDSG.

This is an uncharacterized protein from Escherichia coli (strain K12).